The sequence spans 97 residues: UPF0235 protein Aasi_0294 (97 aa).

It belongs to the UPF0235 family.

In Amoebophilus asiaticus (strain 5a2), this protein is UPF0235 protein Aasi_0294.